Here is a 308-residue protein sequence, read N- to C-terminus: Phosphoribosylaminoimidazole-succinocarboxamide synthase (308 aa).

The protein belongs to the SAICAR synthetase family.

The enzyme catalyses 5-amino-1-(5-phospho-D-ribosyl)imidazole-4-carboxylate + L-aspartate + ATP = (2S)-2-[5-amino-1-(5-phospho-beta-D-ribosyl)imidazole-4-carboxamido]succinate + ADP + phosphate + 2 H(+). Its pathway is purine metabolism; IMP biosynthesis via de novo pathway; 5-amino-1-(5-phospho-D-ribosyl)imidazole-4-carboxamide from 5-amino-1-(5-phospho-D-ribosyl)imidazole-4-carboxylate: step 1/2. This Xylella fastidiosa (strain Temecula1 / ATCC 700964) protein is Phosphoribosylaminoimidazole-succinocarboxamide synthase.